The primary structure comprises 900 residues: Alanine--tRNA ligase (900 aa).

Positions 580, 584, 683, and 687 each coordinate Zn(2+).

Belongs to the class-II aminoacyl-tRNA synthetase family. Zn(2+) is required as a cofactor.

The protein resides in the cytoplasm. It catalyses the reaction tRNA(Ala) + L-alanine + ATP = L-alanyl-tRNA(Ala) + AMP + diphosphate. Functionally, catalyzes the attachment of alanine to tRNA(Ala) in a two-step reaction: alanine is first activated by ATP to form Ala-AMP and then transferred to the acceptor end of tRNA(Ala). Also edits incorrectly charged Ser-tRNA(Ala) and Gly-tRNA(Ala) via its editing domain. In Mycolicibacterium paratuberculosis (strain ATCC BAA-968 / K-10) (Mycobacterium paratuberculosis), this protein is Alanine--tRNA ligase.